A 291-amino-acid polypeptide reads, in one-letter code: Formamidopyrimidine-DNA glycosylase (291 aa).

P2 serves as the catalytic Schiff-base intermediate with DNA. The active-site Proton donor is E3. K58 functions as the Proton donor; for beta-elimination activity in the catalytic mechanism. The DNA site is built by H104, R127, and R172. Residues 257–291 (FVYDRAGLPCRACGTPIRQIVQGQRSTFCCPTCQR) form an FPG-type zinc finger. The active-site Proton donor; for delta-elimination activity is R281.

This sequence belongs to the FPG family. As to quaternary structure, monomer. Requires Zn(2+) as cofactor.

The enzyme catalyses Hydrolysis of DNA containing ring-opened 7-methylguanine residues, releasing 2,6-diamino-4-hydroxy-5-(N-methyl)formamidopyrimidine.. It catalyses the reaction 2'-deoxyribonucleotide-(2'-deoxyribose 5'-phosphate)-2'-deoxyribonucleotide-DNA = a 3'-end 2'-deoxyribonucleotide-(2,3-dehydro-2,3-deoxyribose 5'-phosphate)-DNA + a 5'-end 5'-phospho-2'-deoxyribonucleoside-DNA + H(+). In terms of biological role, involved in base excision repair of DNA damaged by oxidation or by mutagenic agents. Acts as a DNA glycosylase that recognizes and removes damaged bases. Has a preference for oxidized purines, such as 7,8-dihydro-8-oxoguanine (8-oxoG). Has AP (apurinic/apyrimidinic) lyase activity and introduces nicks in the DNA strand. Cleaves the DNA backbone by beta-delta elimination to generate a single-strand break at the site of the removed base with both 3'- and 5'-phosphates. The polypeptide is Formamidopyrimidine-DNA glycosylase (Ralstonia pickettii (strain 12J)).